A 267-amino-acid polypeptide reads, in one-letter code: Eukaryotic translation initiation factor 3 subunit J (267 aa).

Positions 1–70 (MSWNDDDVFA…KDKKSSTDQV (70 aa)) are disordered. Residues 24 to 38 (WDAEEPIMESWDAEE) are compositionally biased toward acidic residues. A compositionally biased stretch (basic and acidic residues) spans 39 to 66 (TPAKKETSPKPDSKKNAKKDSKKDKKSS). Residues 192 to 220 (IESIRQSIATLNVLMKDKEREERRARLAK) adopt a coiled-coil conformation.

The protein belongs to the eIF-3 subunit J family. Component of the eukaryotic translation initiation factor 3 (eIF-3) complex.

Its subcellular location is the cytoplasm. Functionally, component of the eukaryotic translation initiation factor 3 (eIF-3) complex, which is involved in protein synthesis of a specialized repertoire of mRNAs and, together with other initiation factors, stimulates binding of mRNA and methionyl-tRNAi to the 40S ribosome. The eIF-3 complex specifically targets and initiates translation of a subset of mRNAs involved in cell proliferation. The polypeptide is Eukaryotic translation initiation factor 3 subunit J (Vanderwaltozyma polyspora (strain ATCC 22028 / DSM 70294 / BCRC 21397 / CBS 2163 / NBRC 10782 / NRRL Y-8283 / UCD 57-17) (Kluyveromyces polysporus)).